Here is a 905-residue protein sequence, read N- to C-terminus: Transcriptional regulator MNL1 (905 aa).

A compositionally biased stretch (polar residues) spans Met1–Leu29. 8 disordered regions span residues Met1 to Phe34, Gln312 to Thr340, Met383 to Tyr419, Ser434 to Ser460, Thr525 to Arg544, Asn584 to Ser613, Asn625 to Glu671, and Pro685 to Thr733. Over residues Gln312–Gln334 the composition is skewed to low complexity. Residues Asn439 to Ser460 are compositionally biased toward low complexity. Residues Asn584 to Thr598 are compositionally biased toward polar residues. Basic residues predominate over residues Lys628–Gly639. Composition is skewed to low complexity over residues Gln647–Thr669 and Ser690–Ser710. C2H2-type zinc fingers lie at residues Tyr832 to His855 and Tyr861 to His883. Positions Gln885 to Gly905 are disordered.

The protein localises to the nucleus. In terms of biological role, transcription factor that activates stress response genes via SLE (STRE-like) elements. Required for adaptation to weak acid stress such as acetic acid stress, but seems not involved in the response to heat, osmotic, ethanol, nutrient, oxidative, or heavy-metal stress. Activates a subset of the genes that are repressed by NRG1. The chain is Transcriptional regulator MNL1 (MNL1) from Candida albicans (strain SC5314 / ATCC MYA-2876) (Yeast).